Here is a 555-residue protein sequence, read N- to C-terminus: Urocanate hydratase (555 aa).

Residues 52–53 (GG), glutamine 130, 176–178 (GMG), glutamate 196, arginine 201, 242–243 (NA), 263–267 (QTSAH), 273–274 (YL), and tyrosine 322 each bind NAD(+). The active site involves cysteine 410. Glycine 492 lines the NAD(+) pocket.

It belongs to the urocanase family. NAD(+) serves as cofactor.

The protein resides in the cytoplasm. The catalysed reaction is 4-imidazolone-5-propanoate = trans-urocanate + H2O. Its pathway is amino-acid degradation; L-histidine degradation into L-glutamate; N-formimidoyl-L-glutamate from L-histidine: step 2/3. Catalyzes the conversion of urocanate to 4-imidazolone-5-propionate. This chain is Urocanate hydratase, found in Shewanella baltica (strain OS223).